The chain runs to 464 residues: Argininosuccinate lyase (464 aa).

A2 is subject to N-acetylalanine. K7 is subject to N6-acetyllysine. S27 serves as a coordination point for 2-(N(omega)-L-arginino)succinate. Position 69 is an N6-acetyllysine (K69). N114 and T159 together coordinate 2-(N(omega)-L-arginino)succinate. H160 functions as the Proton acceptor in the catalytic mechanism. Catalysis depends on S281, which acts as the Proton donor. At K288 the chain carries N6-acetyllysine. N289, Y321, Q326, and K329 together coordinate 2-(N(omega)-L-arginino)succinate.

The protein belongs to the lyase 1 family. Argininosuccinate lyase subfamily. In terms of assembly, homotetramer. Forms tissue-specific complexes with ASS1, SLC7A1, HSP90AA1 and nitric oxide synthase NOS1, NOS2 or NOS3; the complex maintenance is independent of ASL catalytic function. Post-translationally, acetylation modifies enzyme activity in response to alterations of extracellular nutrient availability. Acetylation increased with trichostin A (TSA) or with nicotinamide (NAM). Glucose increases acetylation by about a factor of 3 with decreasing enzyme activity. Acetylation on Lys-288 is decreased on the addition of extra amino acids resulting in activation of enzyme activity. In terms of tissue distribution, expressed in lung and brain (at protein level).

The enzyme catalyses 2-(N(omega)-L-arginino)succinate = fumarate + L-arginine. It participates in amino-acid biosynthesis; L-arginine biosynthesis; L-arginine from L-ornithine and carbamoyl phosphate: step 3/3. Its pathway is nitrogen metabolism; urea cycle; L-arginine and fumarate from (N(omega)-L-arginino)succinate: step 1/1. Its activity is regulated as follows. Enzyme activity is regulated by acetylation. In terms of biological role, catalyzes the reversible cleavage of L-argininosuccinate to fumarate and L-arginine, an intermediate step reaction in the urea cycle mostly providing for hepatic nitrogen detoxification into excretable urea as well as de novo L-arginine synthesis in nonhepatic tissues. Essential regulator of intracellular and extracellular L-arginine pools. As part of citrulline-nitric oxide cycle, forms tissue-specific multiprotein complexes with argininosuccinate synthase ASS1, transport protein SLC7A1 and nitric oxide synthase NOS1, NOS2 or NOS3, allowing for cell-autonomous L-arginine synthesis while channeling extracellular L-arginine to nitric oxide synthesis pathway. The sequence is that of Argininosuccinate lyase (Asl) from Mus musculus (Mouse).